The chain runs to 342 residues: Probable dual-specificity RNA methyltransferase RlmN (342 aa).

Glu-91 acts as the Proton acceptor in catalysis. Positions 97 to 326 constitute a Radical SAM core domain; it reads YKFGNTACVS…CTVRRELGSD (230 aa). Cys-104 and Cys-331 are oxidised to a cystine. [4Fe-4S] cluster is bound by residues Cys-111, Cys-115, and Cys-118. S-adenosyl-L-methionine contacts are provided by residues 157-158, Ser-189, 212-214, and Asn-288; these read GE and SLH. The active-site S-methylcysteine intermediate is Cys-331.

This sequence belongs to the radical SAM superfamily. RlmN family. [4Fe-4S] cluster serves as cofactor.

The protein resides in the cytoplasm. It carries out the reaction adenosine(2503) in 23S rRNA + 2 reduced [2Fe-2S]-[ferredoxin] + 2 S-adenosyl-L-methionine = 2-methyladenosine(2503) in 23S rRNA + 5'-deoxyadenosine + L-methionine + 2 oxidized [2Fe-2S]-[ferredoxin] + S-adenosyl-L-homocysteine. The catalysed reaction is adenosine(37) in tRNA + 2 reduced [2Fe-2S]-[ferredoxin] + 2 S-adenosyl-L-methionine = 2-methyladenosine(37) in tRNA + 5'-deoxyadenosine + L-methionine + 2 oxidized [2Fe-2S]-[ferredoxin] + S-adenosyl-L-homocysteine. Functionally, specifically methylates position 2 of adenine 2503 in 23S rRNA and position 2 of adenine 37 in tRNAs. The chain is Probable dual-specificity RNA methyltransferase RlmN from Caldanaerobacter subterraneus subsp. tengcongensis (strain DSM 15242 / JCM 11007 / NBRC 100824 / MB4) (Thermoanaerobacter tengcongensis).